The following is a 353-amino-acid chain: Stearoyl-CoA desaturase 4 (353 aa).

Residues 1–42 (MTAHLPQEISSRCSTTNIMEPHSRRQQDGEEKMPLQAEDIRP) are disordered. Over 1–66 (MTAHLPQEIS…EGPPPKLEYV (66 aa)) the chain is Cytoplasmic. The span at 8-18 (EISSRCSTTNI) shows a compositional bias: polar residues. The segment covering 21–42 (PHSRRQQDGEEKMPLQAEDIRP) has biased composition (basic and acidic residues). Residues 67 to 87 (WRNIIFMALLHVGALYGITLV) form a helical membrane-spanning segment. N69 serves as a coordination point for substrate. Residues 88–91 (PSCK) lie on the Lumenal side of the membrane. Residues 92-112 (VYTWLLGVFYNVVAGLGITAG) form a helical membrane-spanning segment. The Cytoplasmic portion of the chain corresponds to 113–211 (AHRLWSHRTY…EKLVMFQRRY (99 aa)). H114 and H119 together coordinate Fe cation. The Histidine box-1 signature appears at 114-119 (HRLWSH). The substrate site is built by N142, R149, and D150. The Fe cation site is built by H151, H154, and H155. The Histidine box-2 signature appears at 151-155 (HRAHH). Residues R182 and K183 each contribute to the substrate site. A helical membrane pass occupies residues 212 to 231 (YKLAVTLMFIILPTLVPWYL). The Lumenal segment spans residues 232–235 (WGET). The chain crosses the membrane as a helical span at residues 236–257 (FQHSLCVSNFLRYAVLLNFTWL). W256 contributes to the substrate binding site. Over 258 to 353 (VNSAAHLYGY…RTGDGSHKSS (96 aa)) the chain is Cytoplasmic. Residues H263, H292, H295, and H296 each contribute to the Fe cation site. The Histidine box-3 motif lies at 292–296 (HNYHH).

The protein belongs to the fatty acid desaturase type 1 family. Fe(2+) serves as cofactor. As to expression, detected in heart, but not in brain, liver, skin or adipose tissue.

It is found in the endoplasmic reticulum membrane. The protein localises to the microsome membrane. It carries out the reaction octadecanoyl-CoA + 2 Fe(II)-[cytochrome b5] + O2 + 2 H(+) = (9Z)-octadecenoyl-CoA + 2 Fe(III)-[cytochrome b5] + 2 H2O. The catalysed reaction is hexadecanoyl-CoA + 2 Fe(II)-[cytochrome b5] + O2 + 2 H(+) = (9Z)-hexadecenoyl-CoA + 2 Fe(III)-[cytochrome b5] + 2 H2O. In terms of biological role, stearoyl-CoA desaturase that utilizes O(2) and electrons from reduced cytochrome b5 to introduce the first double bond into saturated fatty acyl-CoA substrates. Catalyzes the insertion of a cis double bond at the delta-9 position into fatty acyl-CoA substrates including palmitoyl-CoA and stearoyl-CoA. Required for the biosynthesis of membrane phospholipids, cholesterol esters and triglycerides. In Mus musculus (Mouse), this protein is Stearoyl-CoA desaturase 4.